The chain runs to 247 residues: Carboxy-S-adenosyl-L-methionine synthase (247 aa).

S-adenosyl-L-methionine is bound by residues Tyr39, 64–66 (GCS), 89–90 (DN), 117–118 (DI), Asn132, and Arg199.

It belongs to the class I-like SAM-binding methyltransferase superfamily. Cx-SAM synthase family. As to quaternary structure, homodimer.

It catalyses the reaction prephenate + S-adenosyl-L-methionine = carboxy-S-adenosyl-L-methionine + 3-phenylpyruvate + H2O. Functionally, catalyzes the conversion of S-adenosyl-L-methionine (SAM) to carboxy-S-adenosyl-L-methionine (Cx-SAM). The chain is Carboxy-S-adenosyl-L-methionine synthase from Escherichia coli O127:H6 (strain E2348/69 / EPEC).